We begin with the raw amino-acid sequence, 275 residues long: Large ribosomal subunit protein uL2 (275 aa).

The disordered stretch occupies residues Gln-220 to Lys-275. The segment covering Phe-257 to Lys-275 has biased composition (basic residues).

It belongs to the universal ribosomal protein uL2 family. Part of the 50S ribosomal subunit. Forms a bridge to the 30S subunit in the 70S ribosome.

Functionally, one of the primary rRNA binding proteins. Required for association of the 30S and 50S subunits to form the 70S ribosome, for tRNA binding and peptide bond formation. It has been suggested to have peptidyltransferase activity; this is somewhat controversial. Makes several contacts with the 16S rRNA in the 70S ribosome. This is Large ribosomal subunit protein uL2 from Wolinella succinogenes (strain ATCC 29543 / DSM 1740 / CCUG 13145 / JCM 31913 / LMG 7466 / NCTC 11488 / FDC 602W) (Vibrio succinogenes).